Here is a 398-residue protein sequence, read N- to C-terminus: 1-deoxy-D-xylulose 5-phosphate reductoisomerase (398 aa).

Thr11, Gly12, Ser13, Ile14, Arg38, Asn39, and Asn125 together coordinate NADPH. Residue Lys126 coordinates 1-deoxy-D-xylulose 5-phosphate. Residue Glu127 participates in NADPH binding. Asp151 serves as a coordination point for Mn(2+). Residues Ser152, Glu153, Ser179, and His202 each coordinate 1-deoxy-D-xylulose 5-phosphate. Glu153 contributes to the Mn(2+) binding site. Gly208 is a binding site for NADPH. Ser215, Asn220, Lys221, and Glu224 together coordinate 1-deoxy-D-xylulose 5-phosphate. Glu224 contacts Mn(2+).

Belongs to the DXR family. The cofactor is Mg(2+). Mn(2+) serves as cofactor.

The catalysed reaction is 2-C-methyl-D-erythritol 4-phosphate + NADP(+) = 1-deoxy-D-xylulose 5-phosphate + NADPH + H(+). Its pathway is isoprenoid biosynthesis; isopentenyl diphosphate biosynthesis via DXP pathway; isopentenyl diphosphate from 1-deoxy-D-xylulose 5-phosphate: step 1/6. Its function is as follows. Catalyzes the NADPH-dependent rearrangement and reduction of 1-deoxy-D-xylulose-5-phosphate (DXP) to 2-C-methyl-D-erythritol 4-phosphate (MEP). The sequence is that of 1-deoxy-D-xylulose 5-phosphate reductoisomerase from Burkholderia multivorans (strain ATCC 17616 / 249).